The sequence spans 332 residues: Fructose-1,6-bisphosphatase class 1 (332 aa).

Mg(2+) is bound by residues Glu92, Asp113, Leu115, and Asp116. Residues 116–119, Asn209, Tyr242, and Lys272 contribute to the substrate site; that span reads DGSS. Glu278 provides a ligand contact to Mg(2+).

It belongs to the FBPase class 1 family. In terms of assembly, homotetramer. It depends on Mg(2+) as a cofactor.

It is found in the cytoplasm. The enzyme catalyses beta-D-fructose 1,6-bisphosphate + H2O = beta-D-fructose 6-phosphate + phosphate. It functions in the pathway carbohydrate biosynthesis; Calvin cycle. The sequence is that of Fructose-1,6-bisphosphatase class 1 from Prosthecochloris aestuarii (strain DSM 271 / SK 413).